A 443-amino-acid polypeptide reads, in one-letter code: Transcriptional regulatory protein ZraR (443 aa).

Positions 7-121 constitute a Response regulatory domain; the sequence is DILVVDDDIS…KLQLTLSEAL (115 aa). Asp56 is subject to 4-aspartylphosphate. The region spanning 141-370 is the Sigma-54 factor interaction domain; that stretch reads MVGDSPAMRA…LENAVERAVV (230 aa). ATP contacts are provided by Gly172, Thr173, Arg329, and Arg359. A DNA-binding region (H-T-H motif) is located at residues 423–442; it reads KTEAARRLGITRKTLLAKLS.

Phosphorylated by ZraS.

Its subcellular location is the cytoplasm. With respect to regulation, activity of the ZraS/ZraR two-component system is repressed by the zinc-bound form of ZraP, which probably interacts with the periplasmic region of ZraS. Functionally, part of the Zra signaling pathway, an envelope stress response (ESR) system composed of the periplasmic accessory protein ZraP, the histidine kinase ZraS and the transcriptional regulator ZraR. The ZraPSR system contributes to antibiotic resistance and is important for membrane integrity in the presence of membrane-targeting biocides. ZraR is a member of the two-component regulatory system ZraS/ZraR. When activated by ZraS, acts in conjunction with sigma-54 to regulate the expression of zraP in the presence of high Zn(2+) or Pb(2+) concentrations. Also positively autoregulates the expression of the zraSR operon. The sequence is that of Transcriptional regulatory protein ZraR (zraR) from Klebsiella oxytoca.